We begin with the raw amino-acid sequence, 1587 residues long: DNA topoisomerase 2 (1587 aa).

The span at 1-15 shows a compositional bias: acidic residues; the sequence is MSDADPFDMSDDDDN. The disordered stretch occupies residues 1 to 47; it reads MSDADPFDMSDDDDNSVLSHTPPKKQKKAPTTKKGGSKPLADVENES. The segment covering 22-31 has biased composition (basic residues); sequence PPKKQKKAPT. ATP-binding positions include asparagine 126, asparagine 155, 183–185, and 196–203; these read SSN and GRNGFGAK. Interaction with DNA regions lie at residues 381–383 and 381–386; these read KKK and KKKNKN. An ATP-binding site is contributed by 415–417; it reads QTK. Residues 461 to 485 are disordered; sequence MLKKTDGGRRSRMNNPKLTDANKAG. Positions 492 to 606 constitute a Toprim domain; it reads CTLILTEGDS…SLLKIPEFLI (115 aa). Mg(2+) contacts are provided by glutamate 498, aspartate 575, and aspartate 577. Positions 743-1190 constitute a Topo IIA-type catalytic domain; the sequence is IPSVVDGLKP…SKEDIWKRDL (448 aa). Tyrosine 833 serves as the catalytic O-(5'-phospho-DNA)-tyrosine intermediate. Residues 1016–1025 are interaction with DNA; sequence KLSKTMTTTN. The segment at 1204–1587 is disordered; sequence EARRQRKVAN…PRPRRPRRRS (384 aa). Positions 1271–1280 are enriched in low complexity; it reads LSFLGKSSAK. The segment covering 1308 to 1320 has biased composition (basic and acidic residues); sequence PKSEPKADPKPKD. Positions 1321–1334 are enriched in acidic residues; it reads EDEDIVMEDSDIEE. Positions 1348-1364 are enriched in basic and acidic residues; sequence VKPESEDGQAKIAEAPK. Residues 1365-1375 show a composition bias toward basic residues; sequence RGRAAAKPKPK. Acidic residues-rich tracts occupy residues 1379-1391 and 1419-1430; these read EDEEDELDDDDFM and SDSDSDNGDDLL. Composition is skewed to polar residues over residues 1441 to 1451 and 1466 to 1475; these read GSTNGASTSDS and GLKTTASKAS. The segment covering 1512-1521 has biased composition (acidic residues); that stretch reads DNEPEDDDDE. Residues 1524 to 1542 are compositionally biased toward low complexity; the sequence is KPAAKGKAAAKGKSTAAAA. Over residues 1558–1568 the composition is skewed to pro residues; the sequence is PKPPPRLPCPL. Residues 1571–1587 show a composition bias toward basic residues; the sequence is RRTHRSNPRPRRPRRRS.

The protein belongs to the type II topoisomerase family. In terms of assembly, homodimer. It depends on Mg(2+) as a cofactor. Requires Mn(2+) as cofactor. The cofactor is Ca(2+).

The protein resides in the nucleus. It catalyses the reaction ATP-dependent breakage, passage and rejoining of double-stranded DNA.. In terms of biological role, control of topological states of DNA by transient breakage and subsequent rejoining of DNA strands. Topoisomerase II makes double-strand breaks. The sequence is that of DNA topoisomerase 2 (TOP2) from Penicillium chrysogenum (Penicillium notatum).